The following is a 497-amino-acid chain: Succinate-semialdehyde dehydrogenase [NADP(+)] (497 aa).

Catalysis depends on Glu264, which acts as the Proton acceptor. The active-site Nucleophile is Cys298.

This sequence belongs to the aldehyde dehydrogenase family. In terms of assembly, homotetramer.

The protein localises to the cytoplasm. It catalyses the reaction succinate semialdehyde + NAD(+) + H2O = succinate + NADH + 2 H(+). The enzyme catalyses succinate semialdehyde + NADP(+) + H2O = succinate + NADPH + 2 H(+). Its pathway is amino-acid degradation; 4-aminobutanoate degradation. With respect to regulation, inhibited by AMP, ADP anf ATP. Its function is as follows. Catalyzes the oxidation of succinate semialdehyde to succinate. Can utilize both NAD(+) or NADP(+) as a coenzyme, but has a 2.5-fold lower activity with NADP(+) than with NAD(+). Functions in a gamma-aminobutyrate (GABA) degradation pathway that allows growth utilizing GABA as a nitrogen source. Functions in the GABA shunt, which allows to bypass 2 reactions in the TCA cycle by removing alpha-ketoglutarate from the cycle and feeding succinate and NADH back into the cycle. This chain is Succinate-semialdehyde dehydrogenase [NADP(+)], found in Saccharomyces cerevisiae (strain ATCC 204508 / S288c) (Baker's yeast).